Here is an 810-residue protein sequence, read N- to C-terminus: DNA-binding protein REB1 (810 aa).

2 stretches are compositionally biased toward basic and acidic residues: residues 1–10 and 29–44; these read MPSGHNDKNA and HQNH…LENK. Disordered stretches follow at residues 1 to 80, 114 to 161, 180 to 243, 294 to 313, and 346 to 365; these read MPSG…ENIS, NQQD…GVDD, NNNN…TNND, HGLN…LSNS, and QDTQ…AGSV. 2 stretches are compositionally biased toward low complexity: residues 51–64 and 124–135; these read IVES…NNND and NNNTDNGNDSNN. Residues 149–161 show a composition bias toward basic and acidic residues; sequence DKNKKDAGVGVDD. Residues 180 to 191 are compositionally biased toward low complexity; it reads NNNNNNSIANDS. Basic and acidic residues predominate over residues 198-208; it reads HDNGNNHENSQ. The segment covering 346–355 has biased composition (polar residues); sequence QDTQPHQQKS. The residue at position 355 (Ser-355) is a Phosphoserine. An HTH myb-type domain is found at 470–523; it reads HIFEQRGKWTAEEEQELAKLCAEKEGQWAEIGKTLGRMPEDCRDRWRNYVKCGT. The segment at residues 497–519 is a DNA-binding region (H-T-H motif); sequence WAEIGKTLGRMPEDCRDRWRNYV. The disordered stretch occupies residues 572–667; sequence QNDHRNNDED…STHSKSLSNT (96 aa). Positions 586-606 are enriched in low complexity; it reads ASAAAAAAAAIQEQQQLLQQK. The span at 627 to 636 shows a compositional bias: basic and acidic residues; it reads DNKDEDKPHD. Over residues 643 to 667 the composition is skewed to polar residues; that stretch reads DDNSQNSMVPAPSATSTHSKSLSNT. Residues 692–717 form the Myb-like domain; that stretch reads NWTIVSERMGGTRSRIQCRYKWNKLV. A Glycyl lysine isopeptide (Lys-Gly) (interchain with G-Cter in SUMO) cross-link involves residue Lys-807.

The protein resides in the nucleus. Its function is as follows. DNA-binding protein that recognizes sites within both the enhancer and the promoter of rRNA transcription, as well as upstream of many genes transcribed by RNA polymerase II. It is essential for cell growth. May stimulate or inhibit transcription. Specifically recognizes the sequence 5'-CCGGGTA-3' or 5'-CGGGTRR-3' (where R is any purine). A member of the general regulatory factors (GRFs) which act as genome partitioners. Acts as a chromatin insulator which are known as STARs (Subtelomeric anti-silencing region). STARs prevent negative or positive transcription influence by extending across chromatin to a promoter. The polypeptide is DNA-binding protein REB1 (REB1) (Saccharomyces cerevisiae (strain ATCC 204508 / S288c) (Baker's yeast)).